Reading from the N-terminus, the 225-residue chain is Insulin-induced gene 2 protein (225 aa).

The Cytoplasmic segment spans residues 1–28 (MAENDAKPTLPKKSGPYISSVTSHGMNL). Residues 29 to 51 (VIRGIVLFFIGVFLALVLNLLQI) form a helical membrane-spanning segment. Residues 52-70 (QRNVTLFPPDVITSIFSSA) are Lumenal-facing. A helical membrane pass occupies residues 71–88 (WWVPPCCGTASAVIGLLY). The Cytoplasmic portion of the chain corresponds to 89–103 (PCMDRHLGEPHKFKR). A helical transmembrane segment spans residues 104–126 (EWSSVMRCVAVFVGINHASAKVD). Residues 127–129 (FAN) lie on the Lumenal side of the membrane. A helical membrane pass occupies residues 130–148 (NIQLSLTLAALSIGLWWTF). Residues 149–153 (DRSRS) are Cytoplasmic-facing. Residues 154-175 (GFGLGVGIAFLATLVSQLLVYN) form a helical membrane-spanning segment. Residues 176-189 (GVYQYTSPDFLYVR) lie on the Lumenal side of the membrane. The helical transmembrane segment at 190 to 207 (SWLPCIFFAGGITMGNIG) threads the bilayer. Over 208–225 (RQLAMYECKVIAEKSHED) the chain is Cytoplasmic. A KxHxx motif is present at residues 219-225 (AEKSHED).

This sequence belongs to the INSIG family. Interacts with SCAP; interaction is direct and only takes place in the presence of sterols; it prevents interaction between SCAP and the coat protein complex II (COPII). Associates with the SCAP-SREBP complex; association is mediated via its interaction with SCAP and only takes place in the presence of sterols.

Its subcellular location is the endoplasmic reticulum membrane. Functionally, oxysterol-binding protein that mediates feedback control of cholesterol synthesis by controlling both endoplasmic reticulum to Golgi transport of SCAP and degradation of HMGCR. Acts as a negative regulator of cholesterol biosynthesis by mediating the retention of the SCAP-SREBP complex in the endoplasmic reticulum, thereby blocking the processing of sterol regulatory element-binding proteins (SREBPs). Binds oxysterol, including 22-hydroxycholesterol, 24-hydroxycholesterol, 25-hydroxycholesterol and 27-hydroxycholesterol, regulating interaction with SCAP and retention of the SCAP-SREBP complex in the endoplasmic reticulum. In presence of oxysterol, interacts with SCAP, retaining the SCAP-SREBP complex in the endoplasmic reticulum, thereby preventing SCAP from escorting SREBPs to the Golgi. Sterol deprivation reduces oxysterol-binding, disrupting the interaction between INSIG2 and SCAP, thereby promoting Golgi transport of the SCAP-SREBP complex, followed by processing and nuclear translocation of SREBPs. Also regulates cholesterol synthesis by regulating degradation of HMGCR. The chain is Insulin-induced gene 2 protein from Gallus gallus (Chicken).